A 311-amino-acid chain; its full sequence is Aspartate carbamoyltransferase catalytic subunit (311 aa).

Arginine 59 and threonine 60 together coordinate carbamoyl phosphate. Residue lysine 87 participates in L-aspartate binding. Carbamoyl phosphate contacts are provided by arginine 109, histidine 139, and glutamine 142. Arginine 172 and arginine 224 together coordinate L-aspartate. Carbamoyl phosphate-binding residues include alanine 265 and proline 266.

This sequence belongs to the aspartate/ornithine carbamoyltransferase superfamily. ATCase family. Heterododecamer (2C3:3R2) of six catalytic PyrB chains organized as two trimers (C3), and six regulatory PyrI chains organized as three dimers (R2).

The catalysed reaction is carbamoyl phosphate + L-aspartate = N-carbamoyl-L-aspartate + phosphate + H(+). It functions in the pathway pyrimidine metabolism; UMP biosynthesis via de novo pathway; (S)-dihydroorotate from bicarbonate: step 2/3. In terms of biological role, catalyzes the condensation of carbamoyl phosphate and aspartate to form carbamoyl aspartate and inorganic phosphate, the committed step in the de novo pyrimidine nucleotide biosynthesis pathway. In Streptococcus pyogenes serotype M18 (strain MGAS8232), this protein is Aspartate carbamoyltransferase catalytic subunit.